Reading from the N-terminus, the 92-residue chain is Putative pterin-4-alpha-carbinolamine dehydratase 2 (92 aa).

It belongs to the pterin-4-alpha-carbinolamine dehydratase family.

It carries out the reaction (4aS,6R)-4a-hydroxy-L-erythro-5,6,7,8-tetrahydrobiopterin = (6R)-L-erythro-6,7-dihydrobiopterin + H2O. This chain is Putative pterin-4-alpha-carbinolamine dehydratase 2, found in Gloeobacter violaceus (strain ATCC 29082 / PCC 7421).